The chain runs to 183 residues: Calcium-binding protein M (183 aa).

Residue glycine 2 is the site of N-myristoyl glycine attachment. EF-hand domains are found at residues 25 to 60 (EEVA…KLPN), 61 to 96 (YPED…IGKG), 97 to 132 (SAED…MKNV), and 142 to 177 (DIEL…SPSL). Ca(2+) is bound by residues aspartate 74, aspartate 76, serine 78, threonine 80, glutamate 85, aspartate 110, aspartate 112, serine 114, glutamate 121, aspartate 155, aspartate 157, asparagine 159, and glutamate 166.

The protein belongs to the recoverin family.

The sequence is that of Calcium-binding protein M (cbpM) from Dictyostelium discoideum (Social amoeba).